Reading from the N-terminus, the 890-residue chain is Translation initiation factor IF-2 (890 aa).

The tract at residues 45–304 is disordered; it reads LIDHLNQKNS…LQQGFQKPAQ (260 aa). Residues 67-81 show a composition bias toward polar residues; sequence STLNIPGTGGKSKSV. The segment covering 92-217 has biased composition (basic and acidic residues); that stretch reads VKRDPQEAER…RMAEENKWTD (126 aa). Positions 252–266 are enriched in basic residues; that stretch reads GRGRNAKAARPKKGN. The span at 267 to 280 shows a compositional bias: basic and acidic residues; the sequence is KHSESKADREEARA. The 170-residue stretch at 389–558 folds into the tr-type G domain; it reads PRAPVVTIMG…LLQAEVLELK (170 aa). The G1 stretch occupies residues 398–405; the sequence is GHVDHGKT. GTP is bound at residue 398-405; it reads GHVDHGKT. Positions 423 to 427 are G2; that stretch reads GITQH. The interval 444 to 447 is G3; that stretch reads DTPG. Residues 444-448 and 498-501 each bind GTP; these read DTPGH and NKID. Positions 498 to 501 are G4; that stretch reads NKID. Residues 534-536 are G5; the sequence is SAK. Residue lysine 808 is modified to N6-acetyllysine.

It belongs to the TRAFAC class translation factor GTPase superfamily. Classic translation factor GTPase family. IF-2 subfamily.

The protein resides in the cytoplasm. Its function is as follows. One of the essential components for the initiation of protein synthesis. Protects formylmethionyl-tRNA from spontaneous hydrolysis and promotes its binding to the 30S ribosomal subunits. Also involved in the hydrolysis of GTP during the formation of the 70S ribosomal complex. In Escherichia fergusonii (strain ATCC 35469 / DSM 13698 / CCUG 18766 / IAM 14443 / JCM 21226 / LMG 7866 / NBRC 102419 / NCTC 12128 / CDC 0568-73), this protein is Translation initiation factor IF-2.